The chain runs to 542 residues: Membrane protein insertase YidC (542 aa).

Helical transmembrane passes span 7 to 27 (LLVMGLLLVSFLIFTQWQQDF), 338 to 358 (FALLTFIQSIVTNWGLAIIGV), 417 to 437 (MGGCLPILIQMPIFIALYWTF), 455 to 475 (LSAQDPYYILPLLMGASMFLL), and 494 to 514 (FMPVMFTVFFLWFPSGLVLYW).

The protein belongs to the OXA1/ALB3/YidC family. Type 1 subfamily. Interacts with the Sec translocase complex via SecD. Specifically interacts with transmembrane segments of nascent integral membrane proteins during membrane integration.

Its subcellular location is the cell inner membrane. Functionally, required for the insertion and/or proper folding and/or complex formation of integral membrane proteins into the membrane. Involved in integration of membrane proteins that insert both dependently and independently of the Sec translocase complex, as well as at least some lipoproteins. Aids folding of multispanning membrane proteins. The sequence is that of Membrane protein insertase YidC from Actinobacillus pleuropneumoniae serotype 3 (strain JL03).